Consider the following 87-residue polypeptide: Cell division topological specificity factor (87 aa).

It belongs to the MinE family.

Prevents the cell division inhibition by proteins MinC and MinD at internal division sites while permitting inhibition at polar sites. This ensures cell division at the proper site by restricting the formation of a division septum at the midpoint of the long axis of the cell. The protein is Cell division topological specificity factor of Neisseria gonorrhoeae (strain ATCC 700825 / FA 1090).